A 244-amino-acid polypeptide reads, in one-letter code: ATP synthase subunit a, chloroplastic (244 aa).

A run of 5 helical transmembrane segments spans residues 35–55, 92–112, 131–151, 196–216, and 217–237; these read QVLITSWVVIAILLGSAAIAV, VPFIGTLFLFIFVSNWSGALL, INTTVALALLTSVAYFYAGIT, LVVVVLVSLVPLVVPIPVMFL, and GLFTSGIQALIFATLAAAYIG.

Belongs to the ATPase A chain family. F-type ATPases have 2 components, CF(1) - the catalytic core - and CF(0) - the membrane proton channel. CF(1) has five subunits: alpha(3), beta(3), gamma(1), delta(1), epsilon(1). CF(0) has four main subunits: a, b, b' and c.

Its subcellular location is the plastid. It localises to the chloroplast thylakoid membrane. Functionally, key component of the proton channel; it plays a direct role in the translocation of protons across the membrane. The polypeptide is ATP synthase subunit a, chloroplastic (Coffea arabica (Arabian coffee)).